A 695-amino-acid polypeptide reads, in one-letter code: Probable serine/threonine-protein kinase DDB_G0279405 (695 aa).

Disordered regions lie at residues 119–138 (IVAQPQPQPQPQPQPQPQPQ) and 149–192 (QIPT…KRHK). Over residues 124–138 (QPQPQPQPQPQPQPQ) the composition is skewed to pro residues. Residues 149–160 (QIPTTPPQQISQ) show a composition bias toward low complexity. Over residues 161 to 173 (FNITGNKSPSSIG) the composition is skewed to polar residues. Residues 201–462 (YVFVRKLGKG…IAEIKSHKWT (262 aa)) form the Protein kinase domain. Residues 207-215 (LGKGTFGKV) and Lys-230 contribute to the ATP site. The Proton acceptor role is filled by Asp-329. Positions 491–580 (TDHTIKPSDN…NQNQNNNNNS (90 aa)) are disordered. Residues 510–528 (LSSSSGGESSGIIGSSNES) show a composition bias toward low complexity. Over residues 529–541 (KSMYNNVNSKQKI) the composition is skewed to polar residues. Over residues 542–580 (QNQNQNQNQNQNQNQNQNQNQNHNQNQNQNQNQNNNNNS) the composition is skewed to low complexity.

This sequence belongs to the protein kinase superfamily. Ser/Thr protein kinase family.

The catalysed reaction is L-seryl-[protein] + ATP = O-phospho-L-seryl-[protein] + ADP + H(+). It carries out the reaction L-threonyl-[protein] + ATP = O-phospho-L-threonyl-[protein] + ADP + H(+). The polypeptide is Probable serine/threonine-protein kinase DDB_G0279405 (Dictyostelium discoideum (Social amoeba)).